The primary structure comprises 977 residues: Glycine dehydrogenase (decarboxylating) (977 aa).

At K702 the chain carries N6-(pyridoxal phosphate)lysine.

This sequence belongs to the GcvP family. As to quaternary structure, the glycine cleavage system is composed of four proteins: P, T, L and H. Requires pyridoxal 5'-phosphate as cofactor.

The enzyme catalyses N(6)-[(R)-lipoyl]-L-lysyl-[glycine-cleavage complex H protein] + glycine + H(+) = N(6)-[(R)-S(8)-aminomethyldihydrolipoyl]-L-lysyl-[glycine-cleavage complex H protein] + CO2. The glycine cleavage system catalyzes the degradation of glycine. The P protein binds the alpha-amino group of glycine through its pyridoxal phosphate cofactor; CO(2) is released and the remaining methylamine moiety is then transferred to the lipoamide cofactor of the H protein. The protein is Glycine dehydrogenase (decarboxylating) of Xanthomonas axonopodis pv. citri (strain 306).